A 940-amino-acid polypeptide reads, in one-letter code: MAPVRGDGMRGLAVFISDIRNCKSKEAEVKRINKELANIRSKFKGDKTLDGYQKKKYVCKLLFIFLLGHDIDFGHMEAVNLLSSNKYSEKQIGYLFISVLVNTNSDLIRLIIQSIKNDLQSRNPVHVNLALQCIANIGSRDMAESFSNEIPKLLVSGDTMDVVKQSAALCLLRLFRSSPDIIPGGEWTSRIIHLLNDQHMGVVTAATSLIDALVKRNPDEYKGCVNLAVSRLSRIVTASYTDLQDYTYYFVPAPWLSVKLLRLLQNYNPVTEEAGVRARLNETLETILNKAQEPPKSKKVQHSNAKNAVLFEAINLIIHSDSEPNLLVRACNQLGQFLSNRETNLRYLALESMCHLATSEFSHEEVKKHQEVVILSMKMEKDVSVRQMAVDLLYAMCDRGNAEEIVQEMLNYLETADYSIREEMVLKVAILAEKYATDYTWYVDVILNLIRIAGDYVSEEVWYRVIQIVINREEVQGYAAKTVFEALQAPACHENMVKVGGYILGEFGNLIAGDSRSAPLVQFKLLHSKYHLCSPMTRALLLSTYIKFINLFPEIRTNIQDVFRQHSNLRSADAELQQRASEYLQLSIVASTDVLATVLEEMPSFPERESSILAVLKKKKPGRVPENEIRESKSPAPLTSAAQNNALVNNSHSKLNNSNANTDLLGLSTPPSNNIGSGSNSNSTLIDVLGDMYGSNSNNNSSAVYNTKKFLFKNNGVLFENEMLQIGVKSEFRQNLGRLGLFYGNKTQVPLTNFNPVLQWSAEDALKLNVQMKVVEPTLEAGAQIQQLLTAECIEDYADAPTIEISFRYNGTQQKFSIKLPLSVNKFFEPTEMNAESFFARWKNLSGEQQRSQKVFKAAQPLDLPGARNKLMGFGMQLLDQVDPNPDNMVCAGIIHTQSQQVGCLMRLEPNKQAQMFRLTVRASKETVTREICDLLTDQF.

Phosphoserine is present on residues Ser-632 and Ser-634. The span at 651–662 shows a compositional bias: polar residues; the sequence is SHSKLNNSNANT. The interval 651 to 679 is disordered; sequence SHSKLNNSNANTDLLGLSTPPSNNIGSGS. The span at 668 to 679 shows a compositional bias: low complexity; sequence STPPSNNIGSGS.

The protein belongs to the adaptor complexes large subunit family. As to quaternary structure, adaptor protein complex 2 (AP-2) is a heterotetramer composed of two large adaptins (alpha-type and beta-type subunits), a medium adaptin (mu-type subunit AP50) and a small adaptin (sigma-type subunit AP17). Expressed in the Garland cells, imaginal disks, adult midgut precursors, the antenno-maxillary complex, the endoderm, the fat bodies, and the visceral mesoderm and cells of the CNS and PNS including neuroblasts, the presumptive stomatogastric nervous system, and the lateral chordotonal sense organs.

Its subcellular location is the cell membrane. It localises to the membrane. The protein localises to the coated pit. In terms of biological role, adaptins are components of the adapter complexes which link clathrin to receptors in coated vesicles. Clathrin-associated protein complexes are believed to interact with the cytoplasmic tails of membrane proteins, leading to their selection and concentration. AP-2alpha is a subunit of the plasma membrane adapter. The protein is AP-2 complex subunit alpha (AP-2alpha) of Drosophila melanogaster (Fruit fly).